The sequence spans 620 residues: Translation initiation factor IF-2 (620 aa).

The region spanning 126 to 295 (KRPPIVTIMG…IVTAEIMELK (170 aa)) is the tr-type G domain. The tract at residues 135–142 (GHVDHGKT) is G1. A GTP-binding site is contributed by 135 to 142 (GHVDHGKT). The G2 stretch occupies residues 160-164 (NITQS). A G3 region spans residues 181–184 (DTPG). GTP is bound by residues 181–185 (DTPGH) and 235–238 (NKMD). The interval 235 to 238 (NKMD) is G4. The interval 271-273 (SAL) is G5.

This sequence belongs to the TRAFAC class translation factor GTPase superfamily. Classic translation factor GTPase family. IF-2 subfamily.

It localises to the cytoplasm. One of the essential components for the initiation of protein synthesis. Protects formylmethionyl-tRNA from spontaneous hydrolysis and promotes its binding to the 30S ribosomal subunits. Also involved in the hydrolysis of GTP during the formation of the 70S ribosomal complex. The polypeptide is Translation initiation factor IF-2 (Malacoplasma penetrans (strain HF-2) (Mycoplasma penetrans)).